Here is an 87-residue protein sequence, read N- to C-terminus: MAVVVRVVYCGAUGYKPKYLQLKKKLEDEFPSRLDICGEGTPQVTGFFEVFVAGKLVHSKKGGDGYVDTESKFLKLVAAIKAALAQA.

Residues cysteine 10–selenocysteine 13 constitute a cross-link (cysteinyl-selenocysteine (Cys-Sec); redox-active). Residue selenocysteine 13 is a non-standard amino acid, selenocysteine. Cysteine 37 is subject to S-glutathionyl cysteine.

Belongs to the SelWTH family. Selenoprotein W subfamily. Interacts with DPYSL2, PRDX1, YWHAB, YWHAG, HSP70 and HSP90. Detected in muscle, heart, tongue, brain, lung, spleen, kidney and liver. Highest levels expressed in muscle and heart whereas lowest levels detected in liver (at protein level).

It is found in the cytoplasm. In terms of biological role, plays a role as a glutathione (GSH)-dependent antioxidant. May be involved in a redox-related process. May play a role in the myopathies of selenium deficiency. This is Selenoprotein W from Ovis aries (Sheep).